A 362-amino-acid chain; its full sequence is 2-oxoglutarate-dependent dioxygenase lolO1 (362 aa).

Positions 199 to 312 constitute a Fe2OG dioxygenase domain; sequence TWNYFLGQPV…RYSLVFFGHL (114 aa). Positions 222, 224, and 280 each coordinate Fe cation. R303 is a binding site for 2-oxoglutarate.

The protein belongs to the iron/ascorbate-dependent oxidoreductase family. Requires Fe(2+) as cofactor.

It participates in alkaloid biosynthesis. In terms of biological role, 2-oxoglutarate-dependent dioxygenase; part of the gene cluster that mediates the biosynthesis of loline alkaloids, potent insecticidal agents composed of a pyrrolizidine ring system and an uncommon ether bridge linking carbons 2 and 7. Lolines are structurally differentiated by the various modifications of the L-amino group and include norloline, loline, N-methylloline, N-acetylloline, N-acetylnorloline, and N-formylloline. The first committed step is the condensation of O-acetyl-L-homoserine (derived from L-aspartic acid) and L-proline, probably catalyzed by the gamma-type pyridoxal 5'-phosphate(PLP)-dependent enzyme lolC, to give the diamino diacid, NACPP. Ensuing cyclization, decarboxylation, and acetylation steps yield 1-exo-acetamidopyrrolizidine (AcAP). LolO is required for installation of the ether bridge upon the pathway intermediate, 1-exo-acetamidopyrrolizidine (AcAP). In sequential 2-oxoglutarate- and O(2)-consuming steps, lolO removes hydrogens from C2 and C7 of AcAP to form both carbon-oxygen bonds in N-acetylnorloline (NANL), the precursor to all other lolines. The enzymes lolD, lolE, lolF and lolT have also been proposed to be involved in the ether-bridge installation. Further processing of the exocyclic moiety of NANL by fungal N-acetamidase (LolN), methyltransferase (LolM), and cytochrome P450 (LolP) enzymes, with occasional involvement of a plant acetyltransferase, generates the other known lolines. LolN transforms NANL to norlonine which is monomethylated and dimethylated to respectively lonine and N-methyllonine (NML) by lolM. LolP catalyzes hydroxylation of the methyl group in N-methylloline (NML) and further oxygenation to N-formylloline (NFL). A plant acetyltransferase is responsible for the acetylation of loline to form N-acetylloline (NAL). LolA might interact with aspartate kinase to prevent feedback inhibition of its activity by these end products and thereby promote production of l-homoserine from l-aspartate. This is 2-oxoglutarate-dependent dioxygenase lolO1 from Epichloe uncinata (Endophyte fungus).